A 321-amino-acid polypeptide reads, in one-letter code: Glutaminase (321 aa).

7 residues coordinate substrate: serine 69, asparagine 120, glutamate 165, asparagine 172, tyrosine 196, tyrosine 248, and valine 266.

This sequence belongs to the glutaminase family. As to quaternary structure, homotetramer.

The enzyme catalyses L-glutamine + H2O = L-glutamate + NH4(+). This chain is Glutaminase, found in Bacteroides thetaiotaomicron (strain ATCC 29148 / DSM 2079 / JCM 5827 / CCUG 10774 / NCTC 10582 / VPI-5482 / E50).